Reading from the N-terminus, the 521-residue chain is CDP-diacylglycerol--glycerol-3-phosphate 3-phosphatidyltransferase (521 aa).

Residue Ala91–Ser98 participates in ATP binding. PLD phosphodiesterase domains follow at residues Gly177–Tyr203 and Asn419–Ala457. Active-site residues include His182, Lys184, and Asp189.

It belongs to the CDP-alcohol phosphatidyltransferase class-II family.

Its subcellular location is the mitochondrion. It catalyses the reaction a CDP-1,2-diacyl-sn-glycerol + sn-glycerol 3-phosphate = a 1,2-diacyl-sn-glycero-3-phospho-(1'-sn-glycero-3'-phosphate) + CMP + H(+). Its pathway is phospholipid metabolism; phosphatidylglycerol biosynthesis; phosphatidylglycerol from CDP-diacylglycerol: step 1/2. Essential for the viability of mitochondrial petite mutant. Catalyzes the committed step to the synthesis of the acidic phospholipids. The polypeptide is CDP-diacylglycerol--glycerol-3-phosphate 3-phosphatidyltransferase (PGS1) (Saccharomyces cerevisiae (strain ATCC 204508 / S288c) (Baker's yeast)).